The chain runs to 691 residues: Lacticin-481/lactococcin-DR transport/processing ATP-binding protein lcnDR3 (691 aa).

The Peptidase C39 domain occupies 6–130 (QNNEQDCLLA…KKFSGYIITL (125 aa)). The active site involves Cys12. Positions 158–434 (TFLYIFSLFI…IQDVMFEISR (277 aa)) constitute an ABC transmembrane type-1 domain. Transmembrane regions (helical) follow at residues 159–179 (FLYI…SIIL), 189–209 (ITYS…SLLM), 262–284 (GILL…IIYL), 289–311 (FTLT…SLIS), and 385–405 (ICVI…LVSI). The region spanning 464 to 689 (IILKDISYSY…LLNDSYNSFV (226 aa)) is the ABC transporter domain. Position 497 to 504 (497 to 504 (GKSGSGKS)) interacts with ATP.

Belongs to the ABC transporter superfamily.

The protein localises to the cell membrane. In terms of biological role, probably implicated in the export process of the lantibiotic lacticin-481/lactococcin-DR. In Lactococcus lactis subsp. lactis (Streptococcus lactis), this protein is Lacticin-481/lactococcin-DR transport/processing ATP-binding protein lcnDR3 (lcnDR3).